The chain runs to 967 residues: Leucine--tRNA ligase (967 aa).

Residues 43 to 53 (PYLSGHLHVGH) carry the 'HIGH' region motif. The 'KMSKS' region motif lies at 650–654 (KMSKS). Lysine 653 lines the ATP pocket.

The protein belongs to the class-I aminoacyl-tRNA synthetase family.

It localises to the cytoplasm. It catalyses the reaction tRNA(Leu) + L-leucine + ATP = L-leucyl-tRNA(Leu) + AMP + diphosphate. The polypeptide is Leucine--tRNA ligase (Thermococcus onnurineus (strain NA1)).